The following is a 347-amino-acid chain: Heat-inducible transcription repressor HrcA (347 aa).

This sequence belongs to the HrcA family.

Functionally, negative regulator of class I heat shock genes (grpE-dnaK-dnaJ and groELS operons). Prevents heat-shock induction of these operons. In Lactococcus lactis subsp. cremoris (strain MG1363), this protein is Heat-inducible transcription repressor HrcA.